We begin with the raw amino-acid sequence, 322 residues long: 4-hydroxythreonine-4-phosphate dehydrogenase (322 aa).

T132 contributes to the substrate binding site. The a divalent metal cation site is built by H160, H205, and H260. Residues K268, N277, and R286 each contribute to the substrate site.

The protein belongs to the PdxA family. As to quaternary structure, homodimer. The cofactor is Zn(2+). It depends on Mg(2+) as a cofactor. Co(2+) is required as a cofactor.

It localises to the cytoplasm. The catalysed reaction is 4-(phosphooxy)-L-threonine + NAD(+) = 3-amino-2-oxopropyl phosphate + CO2 + NADH. It functions in the pathway cofactor biosynthesis; pyridoxine 5'-phosphate biosynthesis; pyridoxine 5'-phosphate from D-erythrose 4-phosphate: step 4/5. Its function is as follows. Catalyzes the NAD(P)-dependent oxidation of 4-(phosphooxy)-L-threonine (HTP) into 2-amino-3-oxo-4-(phosphooxy)butyric acid which spontaneously decarboxylates to form 3-amino-2-oxopropyl phosphate (AHAP). In Xanthomonas campestris pv. campestris (strain 8004), this protein is 4-hydroxythreonine-4-phosphate dehydrogenase.